The primary structure comprises 627 residues: Hemocyanin B chain (627 aa).

His173, His177, and His204 together coordinate Cu cation. 2 N-linked (GlcNAc...) asparagine glycosylation sites follow: Asn312 and Asn316. Cu cation is bound by residues His324, His328, and His364. Cys534 and Cys582 are disulfide-bonded.

Belongs to the tyrosinase family. Hemocyanin subfamily. In terms of assembly, tarantula hemocyanin is a 24-chain polymer with seven different chains identified. In terms of tissue distribution, hemolymph.

It localises to the secreted. Its subcellular location is the extracellular space. Hemocyanins are copper-containing oxygen carriers occurring freely dissolved in the hemolymph of many mollusks and arthropods. In Aphonopelma sp. (American tarantula), this protein is Hemocyanin B chain (HCB).